Consider the following 155-residue polypeptide: Interleukin-36 receptor antagonist protein (155 aa).

Cys8 and Cys154 are disulfide-bonded.

It belongs to the IL-1 family. Interacts with cargo receptor TMED10; the interaction mediates the translocation from the cytoplasm into the ERGIC (endoplasmic reticulum-Golgi intermediate compartment) and thereby secretion. In terms of tissue distribution, predominantly expressed in skin keratinocytes but not in fibroblasts, endothelial cells or melanocytes. Detected also in the spleen, brain leukocyte and macrophage cell types. Increased in lesional psoriasis skin.

The protein localises to the cytoplasm. The protein resides in the secreted. In terms of biological role, inhibits the activity of interleukin-36 (IL36A,IL36B and IL36G) by binding to receptor IL1RL2 and preventing its association with the coreceptor IL1RAP for signaling. Part of the IL-36 signaling system that is thought to be present in epithelial barriers and to take part in local inflammatory response; similar to the IL-1 system with which it shares the coreceptor. Proposed to play a role in skin inflammation. May be involved in the innate immune response to fungal pathogens, such as Aspergillus fumigatus. May activate an anti-inflammatory signaling pathway by recruiting SIGIRR. The protein is Interleukin-36 receptor antagonist protein of Homo sapiens (Human).